The chain runs to 217 residues: 3-oxo-tetronate 4-phosphate decarboxylase (217 aa).

Zn(2+) contacts are provided by His-93 and His-95. Residue Tyr-120 is the Proton donor of the active site.

It belongs to the aldolase class II family. AraD/FucA subfamily. The cofactor is Zn(2+).

It catalyses the reaction 3-dehydro-4-O-phospho-D-erythronate + H(+) = dihydroxyacetone phosphate + CO2. It carries out the reaction 3-dehydro-4-O-phospho-L-erythronate + H(+) = dihydroxyacetone phosphate + CO2. Its function is as follows. Catalyzes the decarboxylation of 3-oxo-tetronate 4-phosphate to dihydroxyacetone phosphate (DHAP) and CO(2). The polypeptide is 3-oxo-tetronate 4-phosphate decarboxylase (Cupriavidus necator (strain ATCC 17699 / DSM 428 / KCTC 22496 / NCIMB 10442 / H16 / Stanier 337) (Ralstonia eutropha)).